A 22-amino-acid chain; its full sequence is Fuctinin-2 (22 aa).

The segment at 1-22 (ELPGLPKGEKEQQEAIEHIDEV) is disordered. Residues 7–22 (KGEKEQQEAIEHIDEV) are compositionally biased toward basic and acidic residues.

This sequence to human SET/PHAPII protein. In terms of assembly, oligomer.

It is found in the cytoplasm. Functionally, has a role in the physiological regulation of fucosylation processes. The protein is Fuctinin-2 of Rattus norvegicus (Rat).